We begin with the raw amino-acid sequence, 92 residues long: RIIa domain-containing protein 1 (92 aa).

An RIIa domain is found at 43-77 (KEVELLISGFFREMFLKRPDNIPEFAADYFTDPRL).

This is RIIa domain-containing protein 1 (RIIAD1) from Bos taurus (Bovine).